The primary structure comprises 647 residues: 5-aminolevulinate synthase, non-specific, mitochondrial (647 aa).

A mitochondrion-targeting transit peptide spans 1–56 (METVVRRCPFLSRVPQAFLQKAGKSLLFYAQNCPKMMEIGAKPAPRALSTSAVLCQ). Positions 61–112 (TPPANEKDKAAKAEVQQAPDGSQQAPDGSQQTADGTQLPSGHPSLASSQGTG) are disordered. Positions 79-112 (PDGSQQAPDGSQQTADGTQLPSGHPSLASSQGTG) are enriched in polar residues. Residues Arg-224, Ser-341, and Lys-360 each coordinate substrate. Pyridoxal 5'-phosphate-binding residues include Ser-393, His-421, and Thr-449. The active site involves Lys-452. Lys-452 bears the N6-(pyridoxal phosphate)lysine mark. Pyridoxal 5'-phosphate contacts are provided by Thr-481 and Thr-482. Thr-569 is a substrate binding site. Pro-583 carries the hydroxyproline modification.

The protein belongs to the class-II pyridoxal-phosphate-dependent aminotransferase family. As to quaternary structure, homodimer. Interacts (hydroxylated form) with VHL. The cofactor is pyridoxal 5'-phosphate. Post-translationally, in normoxia, is hydroxylated at Pro-583, promoting interaction with VHL, initiating ubiquitination and subsequent degradation via the proteasome. Ubiquitinated; in normoxia following hydroxylation and interaction with VHL, leading to its subsequent degradation via the proteasome.

The protein localises to the mitochondrion inner membrane. The enzyme catalyses succinyl-CoA + glycine + H(+) = 5-aminolevulinate + CO2 + CoA. It functions in the pathway porphyrin-containing compound metabolism; protoporphyrin-IX biosynthesis; 5-aminolevulinate from glycine: step 1/1. Its function is as follows. Catalyzes the pyridoxal 5'-phosphate (PLP)-dependent condensation of succinyl-CoA and glycine to form aminolevulinic acid (ALA), with CoA and CO2 as by-products. This Bos taurus (Bovine) protein is 5-aminolevulinate synthase, non-specific, mitochondrial (ALAS1).